The primary structure comprises 460 residues: Arginine decarboxylase (460 aa).

An N6-(pyridoxal phosphate)lysine modification is found at Lys-226.

The protein belongs to the Orn/Lys/Arg decarboxylase class-I family. It depends on pyridoxal 5'-phosphate as a cofactor.

The protein resides in the cytoplasm. The enzyme catalyses L-arginine + H(+) = agmatine + CO2. The protein operates within amine and polyamine biosynthesis; agmatine biosynthesis; agmatine from L-arginine: step 1/1. Catalyzes the formation of agmatine from arginine. The chain is Arginine decarboxylase (speA) from Bacillus cereus (strain ATCC 14579 / DSM 31 / CCUG 7414 / JCM 2152 / NBRC 15305 / NCIMB 9373 / NCTC 2599 / NRRL B-3711).